Here is a 477-residue protein sequence, read N- to C-terminus: Cysteine--tRNA ligase (477 aa).

Residue Cys-28 coordinates Zn(2+). Residues 30–40 carry the 'HIGH' region motif; that stretch reads PTVYDYPHLGH. Zn(2+)-binding residues include Cys-208, His-233, and Glu-237. The 'KMSKS' region signature appears at 265–269; that stretch reads KMSKS. Lys-268 provides a ligand contact to ATP.

This sequence belongs to the class-I aminoacyl-tRNA synthetase family. Requires Zn(2+) as cofactor.

Its subcellular location is the cytoplasm. It carries out the reaction tRNA(Cys) + L-cysteine + ATP = L-cysteinyl-tRNA(Cys) + AMP + diphosphate. This is Cysteine--tRNA ligase from Pyrococcus furiosus (strain ATCC 43587 / DSM 3638 / JCM 8422 / Vc1).